The sequence spans 299 residues: Beta-lactamase VEB-1 (299 aa).

Residues 1–23 form the signal peptide; that stretch reads MKIVKRILLVLLSLFFTIVYSNA. The active-site Nucleophile; acyl-ester intermediate is S68. Residues K71, S131, and E167 each contribute to the a beta-lactam site. The active-site Proton acceptor is E167.

It belongs to the class-A beta-lactamase family.

It carries out the reaction a beta-lactam + H2O = a substituted beta-amino acid. Inhibited by the beta-lactamase-blocking agent clavulanic acid. Its function is as follows. Class A beta-lactamase which confers resistance to the beta-lactam antibiotics, including penicillins and cephalosporins, in E.coli strain JM109. Acts via hydrolysis of the beta-lactam ring. Has penicillin-, and cephalosporin-hydrolyzing activities. This chain is Beta-lactamase VEB-1, found in Pseudomonas aeruginosa.